The chain runs to 286 residues: Mating type protein A-1 (286 aa).

A DNA-binding region (alpha box) is located at residues 40 to 95 (AAKKKVNGFMSFRSYYSPLFSQLPQKERSPFMTILWQHDPFHNEWNFMCSVYSSIR).

This sequence belongs to the MATALPHA1 family.

The protein resides in the nucleus. In terms of biological role, required for expression of the heterokaryon incompatibility and sexual functions. In Neurospora africana, this protein is Mating type protein A-1 (MTA-1).